Reading from the N-terminus, the 219-residue chain is Cytochrome b6 (219 aa).

The chain crosses the membrane as a helical span at residues 32-52 (IFYCFGGIVLTAFIFQGASGF). Cys35 contributes to the heme c binding site. Residues His86 and His100 each coordinate heme b. Helical transmembrane passes span 90-110 (SGCM…TGGF), 116-136 (LTWI…VTGY), and 190-210 (IHTF…FSLL). Residues His191 and His206 each coordinate heme b.

Belongs to the cytochrome b family. PetB subfamily. As to quaternary structure, the 4 large subunits of the cytochrome b6-f complex are cytochrome b6, subunit IV (17 kDa polypeptide, PetD), cytochrome f and the Rieske protein, while the 4 small subunits are PetG, PetL, PetM and PetN. The complex functions as a dimer. The cofactor is heme b. Heme c serves as cofactor.

The protein localises to the plastid. Its subcellular location is the chloroplast thylakoid membrane. In terms of biological role, component of the cytochrome b6-f complex, which mediates electron transfer between photosystem II (PSII) and photosystem I (PSI), cyclic electron flow around PSI, and state transitions. This Heterocapsa triquetra (Dinoflagellate) protein is Cytochrome b6.